Reading from the N-terminus, the 402-residue chain is Arabinosyltransferase RRA1 (402 aa).

Residues 1 to 13 (MAVRKEKVQPFRE) lie on the Cytoplasmic side of the membrane. A helical; Signal-anchor for type II membrane protein membrane pass occupies residues 14–34 (CGIAIAVLVGIFIGCVCTILI). Over 35 to 402 (PNDFVNFRSS…DALDRFRDGS (368 aa)) the chain is Lumenal. The DXD motif signature appears at 225–227 (DVD). Asn-253 carries N-linked (GlcNAc...) asparagine glycosylation.

It belongs to the glycosyltransferase 77 family. As to expression, expressed in leaf meristem and at points of cauline leaf attachments on the primary stem. Expressed at low levels in siliques.

Its subcellular location is the golgi apparatus membrane. Plays a role in the arabinosylation of cell wall components. Involved in the arabinosylation of extensin proteins in root hair cells. Extensins are structural glycoproteins present in cell walls and its arabinosylation is important for root hair cell development. The protein is Arabinosyltransferase RRA1 of Arabidopsis thaliana (Mouse-ear cress).